The primary structure comprises 175 residues: ATP synthase subunit b 2 (175 aa).

A helical transmembrane segment spans residues 20–40 (LIFWTAVTFVIVLLILKKFAW).

The protein belongs to the ATPase B chain family. F-type ATPases have 2 components, F(1) - the catalytic core - and F(0) - the membrane proton channel. F(1) has five subunits: alpha(3), beta(3), gamma(1), delta(1), epsilon(1). F(0) has four main subunits: a(1), b(2) and c(10-14). The alpha and beta chains form an alternating ring which encloses part of the gamma chain. F(1) is attached to F(0) by a central stalk formed by the gamma and epsilon chains, while a peripheral stalk is formed by the delta and b chains.

The protein resides in the cell inner membrane. In terms of biological role, f(1)F(0) ATP synthase produces ATP from ADP in the presence of a proton or sodium gradient. F-type ATPases consist of two structural domains, F(1) containing the extramembraneous catalytic core and F(0) containing the membrane proton channel, linked together by a central stalk and a peripheral stalk. During catalysis, ATP synthesis in the catalytic domain of F(1) is coupled via a rotary mechanism of the central stalk subunits to proton translocation. Functionally, component of the F(0) channel, it forms part of the peripheral stalk, linking F(1) to F(0). This chain is ATP synthase subunit b 2, found in Prosthecochloris aestuarii (strain DSM 271 / SK 413).